A 614-amino-acid polypeptide reads, in one-letter code: MTVNTTDRLAALRSLMKERSVDIYVVPSEDSHASEYITDCDARRTFISGFSGSAGTAVVTLDKAALATDGRYFNQASKQLDENWHLLKTGLQDVPTWQEWTADESAGGKTVGIDPTLISPAVAEKLNGDIKKHGGSGLKAVTENLVDLVWGESRPPRPSEPVFLLGAKYAGKGAAEKLTDLRKELEKKKAAAFVVSMLDEIAWLFNLRGNDITYNPVFFSYAIVTKDSATLYVDESKLTDEVKQYLAENGTEIKPYTDLFKDTEVLANAAKSTSESEKPTKYLVSNKASWALKLALGGEKHVDEVRSPIGDAKAIKNETELEGMRKCHIRDGAALIKYFAWLEDQLVNKKAKLNEVEAADQLEKFRSEQSDFVGLSFDTISSTGPNGAIIHYKPERGACSVIDPNAIYLCDSGAQFYDGTTDVTRTLHFGQPTAAEKKSYTLVLKGNIALDTAVFPKGTSGFALDALARQFLWKYGLDYRHGTGHGVGSFLNVHEGPIGIGTRKAYIDVPLAPGNVLSIEPGYYEDGNYGIRIENLAIVREVKTEHQFGDKPYLGFEHITMVPYCRKLIDESLLTQEEKDWLNKSNEEIRKNMAGYFDGDQLTTDWLLRETSPF.

Mn(2+)-binding residues include aspartate 411, aspartate 422, glutamate 520, and glutamate 534.

It belongs to the peptidase M24B family. Mn(2+) serves as cofactor.

The enzyme catalyses Release of any N-terminal amino acid, including proline, that is linked to proline, even from a dipeptide or tripeptide.. In terms of biological role, catalyzes the removal of a penultimate prolyl residue from the N-termini of peptides. This chain is Probable Xaa-Pro aminopeptidase P (AMPP), found in Sordaria macrospora (strain ATCC MYA-333 / DSM 997 / K(L3346) / K-hell).